We begin with the raw amino-acid sequence, 63 residues long: Protein CYSTEINE-RICH TRANSMEMBRANE MODULE 12 (63 aa).

The segment at 1–34 is disordered; it reads MQDMRDQNPPQGYPAAEQVSEQPGQDKKKKKPRF. The chain crosses the membrane as a helical span at residues 40–56; that stretch reads KGDRGFIEGCLFALCCC.

It belongs to the CYSTM1 family. Homodimer and heterodimers. Binds weakly to CYSTM4, CYSTM6 and CYSTM7. Mostly expressed in roots, flowers and siliques and, to a lower extent, in stems and leaves.

The protein resides in the cell membrane. It is found in the cytoplasm. Involved in resistance to abiotic stress. In Arabidopsis thaliana (Mouse-ear cress), this protein is Protein CYSTEINE-RICH TRANSMEMBRANE MODULE 12.